The primary structure comprises 306 residues: tRNA pseudouridine synthase B (306 aa).

Asp-51 acts as the Nucleophile in catalysis.

Belongs to the pseudouridine synthase TruB family. Type 1 subfamily.

It carries out the reaction uridine(55) in tRNA = pseudouridine(55) in tRNA. In terms of biological role, responsible for synthesis of pseudouridine from uracil-55 in the psi GC loop of transfer RNAs. This chain is tRNA pseudouridine synthase B, found in Nocardia farcinica (strain IFM 10152).